Here is a 152-residue protein sequence, read N- to C-terminus: Protein-export protein SecB (152 aa).

This sequence belongs to the SecB family. As to quaternary structure, homotetramer, a dimer of dimers. One homotetramer interacts with 1 SecA dimer.

Its subcellular location is the cytoplasm. In terms of biological role, one of the proteins required for the normal export of preproteins out of the cell cytoplasm. It is a molecular chaperone that binds to a subset of precursor proteins, maintaining them in a translocation-competent state. It also specifically binds to its receptor SecA. This chain is Protein-export protein SecB, found in Thiobacillus denitrificans (strain ATCC 25259 / T1).